The sequence spans 243 residues: ATP-dependent dethiobiotin synthetase BioD (243 aa).

12–17 (DVGKTF) provides a ligand contact to ATP. Residue T16 coordinates Mg(2+). K37 is an active-site residue. S41 is a binding site for substrate. Residues D54, 115–118 (EGCG), and 179–180 (NM) each bind ATP. Positions 54 and 115 each coordinate Mg(2+).

It belongs to the dethiobiotin synthetase family. As to quaternary structure, homodimer. The cofactor is Mg(2+).

The protein localises to the cytoplasm. It carries out the reaction (7R,8S)-7,8-diammoniononanoate + CO2 + ATP = (4R,5S)-dethiobiotin + ADP + phosphate + 3 H(+). The protein operates within cofactor biosynthesis; biotin biosynthesis; biotin from 7,8-diaminononanoate: step 1/2. Catalyzes a mechanistically unusual reaction, the ATP-dependent insertion of CO2 between the N7 and N8 nitrogen atoms of 7,8-diaminopelargonic acid (DAPA, also called 7,8-diammoniononanoate) to form a ureido ring. In Caldicellulosiruptor bescii (strain ATCC BAA-1888 / DSM 6725 / KCTC 15123 / Z-1320) (Anaerocellum thermophilum), this protein is ATP-dependent dethiobiotin synthetase BioD.